Here is a 390-residue protein sequence, read N- to C-terminus: GTPase Obg (390 aa).

An Obg domain is found at 1–159 (MKFVDEAVIR…RHLRLELLLL (159 aa)). Positions 22–42 (SFRTEKYVPRGGPDGGDGGDG) are disordered. The span at 33 to 42 (GPDGGDGGDG) shows a compositional bias: gly residues. The OBG-type G domain occupies 160-333 (ADVGMLGLPN…LTYNLMTTIE (174 aa)). Residues 166–173 (GLPNAGKS), 191–195 (FTTLI), 213–216 (DIPG), 283–286 (NKVD), and 314–316 (SAL) contribute to the GTP site. Ser-173 and Thr-193 together coordinate Mg(2+).

This sequence belongs to the TRAFAC class OBG-HflX-like GTPase superfamily. OBG GTPase family. As to quaternary structure, monomer. The cofactor is Mg(2+).

It is found in the cytoplasm. An essential GTPase which binds GTP, GDP and possibly (p)ppGpp with moderate affinity, with high nucleotide exchange rates and a fairly low GTP hydrolysis rate. Plays a role in control of the cell cycle, stress response, ribosome biogenesis and in those bacteria that undergo differentiation, in morphogenesis control. The polypeptide is GTPase Obg (Photobacterium profundum (strain SS9)).